A 180-amino-acid chain; its full sequence is Pituitary tumor-transforming gene 1 protein-interacting protein (180 aa).

Residues 1 to 32 form the signal peptide; it reads MAPGVARGPTPYWRLRLGGAALLLLLIPVAAA. Over 33-96 the chain is Extracellular; it reads QEPPGAACSQ…RWGVCWVNFE (64 aa). A PSI domain is found at 39 to 92; sequence ACSQNTNKTCEECLKNVSCLWCNTNKACLDYPVTSVLPPASLCKLSSARWGVCW. 2 N-linked (GlcNAc...) asparagine glycosylation sites follow: asparagine 45 and asparagine 54. The helical transmembrane segment at 97 to 117 threads the bilayer; the sequence is ALIITMSVVGGTLLLGIAICC. Residues 118–180 are Cytoplasmic-facing; the sequence is CCCCRRKRSR…ENPYARFENN (63 aa). The stretch at 130-165 forms a coiled coil; that stretch reads DRSEEKAMREREERRIRQEERRAEMKTRHDEIRKKY. Residues 131 to 157 are disordered; it reads RSEEKAMREREERRIRQEERRAEMKTR. Tyrosine 174 bears the Phosphotyrosine mark.

Interacts with PTTG1. As to expression, ubiquitous.

Its subcellular location is the membrane. It localises to the cytoplasm. The protein resides in the nucleus. Functionally, may facilitate PTTG1 nuclear translocation. This chain is Pituitary tumor-transforming gene 1 protein-interacting protein (PTTG1IP), found in Homo sapiens (Human).